The primary structure comprises 124 residues: Small ribosomal subunit protein uS12 (124 aa).

Residues Met-1–Pro-42 form a disordered region. A 3-methylthioaspartic acid modification is found at Asp-89. The segment at Ala-105–Glu-124 is disordered. Positions Gly-113–Glu-124 are enriched in basic residues.

This sequence belongs to the universal ribosomal protein uS12 family. Part of the 30S ribosomal subunit. Contacts proteins S8 and S17. May interact with IF1 in the 30S initiation complex.

Functionally, with S4 and S5 plays an important role in translational accuracy. Its function is as follows. Interacts with and stabilizes bases of the 16S rRNA that are involved in tRNA selection in the A site and with the mRNA backbone. Located at the interface of the 30S and 50S subunits, it traverses the body of the 30S subunit contacting proteins on the other side and probably holding the rRNA structure together. The combined cluster of proteins S8, S12 and S17 appears to hold together the shoulder and platform of the 30S subunit. This chain is Small ribosomal subunit protein uS12, found in Salinibacter ruber (strain DSM 13855 / M31).